Consider the following 117-residue polypeptide: Non-specific lipid-transfer protein 2 (117 aa).

An N-terminal signal peptide occupies residues 1 to 25 (MAGLMKLACLVLACMIVAGPITSNA). Cystine bridges form between Cys-29-Cys-76, Cys-39-Cys-53, Cys-54-Cys-99, and Cys-74-Cys-113.

Belongs to the plant LTP family.

Its function is as follows. Plant non-specific lipid-transfer proteins transfer phospholipids as well as galactolipids across membranes. May play a role in wax or cutin deposition in the cell walls of expanding epidermal cells and certain secretory tissues. The sequence is that of Non-specific lipid-transfer protein 2 (LTP2) from Brassica napus (Rape).